The primary structure comprises 291 residues: 4-hydroxy-tetrahydrodipicolinate synthase (291 aa).

T44 is a binding site for pyruvate. Residue Y132 is the Proton donor/acceptor of the active site. Catalysis depends on K160, which acts as the Schiff-base intermediate with substrate. I202 is a binding site for pyruvate.

Belongs to the DapA family. In terms of assembly, homotetramer; dimer of dimers.

The protein localises to the cytoplasm. The catalysed reaction is L-aspartate 4-semialdehyde + pyruvate = (2S,4S)-4-hydroxy-2,3,4,5-tetrahydrodipicolinate + H2O + H(+). Its pathway is amino-acid biosynthesis; L-lysine biosynthesis via DAP pathway; (S)-tetrahydrodipicolinate from L-aspartate: step 3/4. Functionally, catalyzes the condensation of (S)-aspartate-beta-semialdehyde [(S)-ASA] and pyruvate to 4-hydroxy-tetrahydrodipicolinate (HTPA). In Rhodospirillum centenum (strain ATCC 51521 / SW), this protein is 4-hydroxy-tetrahydrodipicolinate synthase.